A 255-amino-acid polypeptide reads, in one-letter code: MKRLNKLVLGINLLFLVISITAGCGMGKEAEIKKSFEKTLSMYPIKNLEDLYDKEGYRDDQFDKNDKGTWIVRSSMSIQPNGKDMNVKGMVLYMNRNSRTTNGYYYVDVIERQDKGIHRDNEKKYPVKMVDNKIIPTKDIKDENIKKEIENFKFFAQYGSFKDLSKYKEGDISYNPEVPSYSAKYQLTNDDYNVKQLRKRYDIPTNKAPKLLLKGTGNLKGSSVGYKDIEFTFVEKKGENIYFSDSLHLEPSEDK.

The N-terminal stretch at 1–23 (MKRLNKLVLGINLLFLVISITAG) is a signal peptide. A lipid anchor (N-palmitoyl cysteine) is attached at Cys-24. Residue Cys-24 is the site of S-diacylglycerol cysteine attachment.

It belongs to the staphylococcal tandem lipoprotein family.

It is found in the cell membrane. This is an uncharacterized protein from Staphylococcus aureus (strain MRSA252).